We begin with the raw amino-acid sequence, 446 residues long: Glutamine synthetase (446 aa).

Residues 18 to 103 (ENVRYLRLQF…LICDVYKTDG (86 aa)) form the GS beta-grasp domain. The GS catalytic domain maps to 110 to 446 (PRANLKRVLK…WERDQYMKQY (337 aa)). Positions 134 and 136 each coordinate Mg(2+). Position 186 (Glu186) interacts with ATP. Positions 191 and 198 each coordinate Mg(2+). L-glutamate contacts are provided by residues 242–243 (NG) and Gly243. Residue His247 participates in Mg(2+) binding. Ser251 serves as a coordination point for ATP. The L-glutamate site is built by Arg300, Glu306, and Arg318. ATP is bound by residues Arg318 and Arg323. Mg(2+) is bound at residue Glu335. An L-glutamate-binding site is contributed by Arg337.

Belongs to the glutamine synthetase family. As to quaternary structure, oligomer of 12 subunits arranged in the form of two hexagons. In its feedback-inhibited form, interacts with TnrA in order to block its DNA-binding activity. Requires Mg(2+) as cofactor.

It localises to the cytoplasm. The catalysed reaction is L-glutamate + NH4(+) + ATP = L-glutamine + ADP + phosphate + H(+). Its activity is regulated as follows. Inhibited by glutamine. Functionally, glutamine synthetase (GS) is an unusual multitasking protein that functions as an enzyme, a transcription coregulator, and a chaperone in ammonium assimilation and in the regulation of genes involved in nitrogen metabolism. It catalyzes the ATP-dependent biosynthesis of glutamine from glutamate and ammonia. Feedback-inhibited GlnA also interacts with and regulates the activity of the transcriptional regulator TnrA. During nitrogen limitation, TnrA is in its DNA-binding active state and turns on the transcription of genes required for nitrogen assimilation. Under conditions of nitrogen excess, feedback-inhibited GlnA forms a stable complex with TnrA, which inhibits its DNA-binding activity. In contrast, feedback-inhibited GlnA acts as a chaperone to stabilize the DNA-binding activity of GlnR, which represses the transcription of nitrogen assimilation genes. The polypeptide is Glutamine synthetase (Staphylococcus aureus (strain MRSA252)).